The following is a 100-amino-acid chain: Large ribosomal subunit protein bL21 (100 aa).

The protein belongs to the bacterial ribosomal protein bL21 family. In terms of assembly, part of the 50S ribosomal subunit. Contacts protein L20.

Functionally, this protein binds to 23S rRNA in the presence of protein L20. The chain is Large ribosomal subunit protein bL21 from Wolbachia sp. subsp. Drosophila simulans (strain wRi).